The primary structure comprises 63 residues: 2-hydroxymuconate tautomerase (63 aa).

The active-site Proton acceptor; via imino nitrogen is the proline 2.

It belongs to the 4-oxalocrotonate tautomerase family. In terms of assembly, homohexamer.

It catalyses the reaction (2Z,4E)-2-hydroxyhexa-2,4-dienedioate = (3E)-2-oxohex-3-enedioate. The protein operates within xenobiotic degradation; toluene degradation. Its pathway is xenobiotic degradation; xylene degradation. In terms of biological role, catalyzes the ketonization of 2-hydroxymuconate stereoselectively to yield 2-oxo-3-hexenedioate. This is 2-hydroxymuconate tautomerase (xylH) from Pseudomonas putida (Arthrobacter siderocapsulatus).